We begin with the raw amino-acid sequence, 98 residues long: NADH-ubiquinone oxidoreductase chain 4L (98 aa).

3 helical membrane passes run 2–22, 26–46, and 61–81; these read SPIY…TLLF, LMST…MVTS, and ITML…LVMI.

This sequence belongs to the complex I subunit 4L family. As to quaternary structure, core subunit of respiratory chain NADH dehydrogenase (Complex I) which is composed of 45 different subunits.

Its subcellular location is the mitochondrion inner membrane. The catalysed reaction is a ubiquinone + NADH + 5 H(+)(in) = a ubiquinol + NAD(+) + 4 H(+)(out). In terms of biological role, core subunit of the mitochondrial membrane respiratory chain NADH dehydrogenase (Complex I) which catalyzes electron transfer from NADH through the respiratory chain, using ubiquinone as an electron acceptor. Part of the enzyme membrane arm which is embedded in the lipid bilayer and involved in proton translocation. The polypeptide is NADH-ubiquinone oxidoreductase chain 4L (MT-ND4L) (Nephelomys albigularis (Tomes's rice rat)).